A 146-amino-acid chain; its full sequence is Small ribosomal subunit protein bS6 (146 aa).

Residues 94-146 (GPITTPSPMMQEGKSRPPHSSDEDSENTAPAKAKTADSPGEDTRTTEESDPKP) are disordered. Composition is skewed to basic and acidic residues over residues 106-115 (GKSRPPHSSD) and 134-146 (EDTRTTEESDPKP).

The protein belongs to the bacterial ribosomal protein bS6 family.

Its function is as follows. Binds together with bS18 to 16S ribosomal RNA. This chain is Small ribosomal subunit protein bS6, found in Nitrosomonas europaea (strain ATCC 19718 / CIP 103999 / KCTC 2705 / NBRC 14298).